Here is a 248-residue protein sequence, read N- to C-terminus: 3-deoxy-manno-octulosonate cytidylyltransferase (248 aa).

This sequence belongs to the KdsB family.

The protein localises to the cytoplasm. It carries out the reaction 3-deoxy-alpha-D-manno-oct-2-ulosonate + CTP = CMP-3-deoxy-beta-D-manno-octulosonate + diphosphate. The protein operates within nucleotide-sugar biosynthesis; CMP-3-deoxy-D-manno-octulosonate biosynthesis; CMP-3-deoxy-D-manno-octulosonate from 3-deoxy-D-manno-octulosonate and CTP: step 1/1. Its pathway is bacterial outer membrane biogenesis; lipopolysaccharide biosynthesis. In terms of biological role, activates KDO (a required 8-carbon sugar) for incorporation into bacterial lipopolysaccharide in Gram-negative bacteria. The protein is 3-deoxy-manno-octulosonate cytidylyltransferase of Escherichia coli (strain K12 / MC4100 / BW2952).